We begin with the raw amino-acid sequence, 426 residues long: 6-Hydroxy-7-prenyldeoxybrevianamide E synthase notC (426 aa).

Glu94 contributes to the substrate binding site. Arg105, Lys191, and Tyr193 together coordinate dimethylallyl diphosphate. Tyr195 contacts substrate. Residues Lys267, Tyr269, Gln352, Tyr354, Tyr418, and Tyr422 each coordinate dimethylallyl diphosphate.

The protein belongs to the tryptophan dimethylallyltransferase family.

It catalyses the reaction 6-hydroxydeoxybrevianamide E + dimethylallyl diphosphate = notoamide S + diphosphate. It participates in alkaloid biosynthesis. With respect to regulation, addition of 5 mM Mg(2+), Ca(2+) or Mn(2+) slightly enhances catalysis (about 100-120%). Significant reduction of enzyme activity (2%-35%) is observed with Cu(2+), Zn(2+), Fe(2+), or Sn(2+) (5 mM). In terms of biological role, prenyltransferase; part of the gene cluster that mediates the biosynthesis of notoamide, a fungal indole alkaloid that belongs to a family of natural products containing a characteristic bicyclo[2.2.2]diazaoctane core. The first step of notoamide biosynthesis involves coupling of L-proline and L-tryptophan by the bimodular NRPS notE, to produce cyclo-L-tryptophan-L-proline called brevianamide F. The reverse prenyltransferase notF then acts as a deoxybrevianamide E synthase and converts brevianamide F to deoxybrevianamide E via reverse prenylation at C-2 of the indole ring leading to the bicyclo[2.2.2]diazaoctane core. Deoxybrevianamide E is further hydroxylated at C-6 of the indole ring, likely catalyzed by the cytochrome P450 monooxygenase notG, to yield 6-hydroxy-deoxybrevianamide E. 6-hydroxy-deoxybrevianamide E is a specific substrate of the prenyltransferase notC for normal prenylation at C-7 to produce 6-hydroxy-7-prenyl-deoxybrevianamide, also called notoamide S. As the proposed pivotal branching point in notoamide biosynthesis, notoamide S can be diverted to notoamide E through an oxidative pyran ring closure putatively catalyzed by either notH cytochrome P450 monooxygenase or the notD FAD-linked oxidoreductase. This step would be followed by an indole 2,3-epoxidation-initiated pinacol-like rearrangement catalyzed by the notB FAD-dependent monooxygenase leading to the formation of notoamide C and notoamide D. On the other hand notoamide S is converted to notoamide T by notH (or notD), a bifunctional oxidase that also functions as the intramolecular Diels-Alderase responsible for generation of (+)-notoamide T. To generate antipodal (-)-notoaminide T, notH' (or notD') in Aspergillus versicolor is expected to catalyze a Diels-Alder reaction leading to the opposite stereochemistry. The remaining oxidoreductase notD (or notH) likely catalyzes the oxidative pyran ring formation to yield (+)-stephacidin A. The FAD-dependent monooxygenase notI is highly similar to notB and is predicted to catalyze a similar conversion from (+)-stephacidin A to (-)-notoamide B via the 2,3-epoxidation of (+)-stephacidin A followed by a pinacol-type rearrangement. Finally, it remains unclear which enzyme could be responsible for the final hydroxylation steps leading to notoamide A and sclerotiamide. The protein is 6-Hydroxy-7-prenyldeoxybrevianamide E synthase notC of Aspergillus sp. (strain MF297-2).